The sequence spans 83 residues: Putative defensin-like protein 110 (83 aa).

Residues 1–24 (MAITKKNLIAFVFTILFVISYVHC) form the signal peptide. Cystine bridges form between C43–C81, C49–C73, C59–C79, and C63–C80.

It belongs to the DEFL family.

The protein resides in the secreted. This is Putative defensin-like protein 110 from Arabidopsis thaliana (Mouse-ear cress).